A 45-amino-acid polypeptide reads, in one-letter code: Iota-conotoxin-like R11.10 (45 aa).

Disulfide bonds link cysteine 5–cysteine 19, cysteine 12–cysteine 22, cysteine 18–cysteine 27, and cysteine 21–cysteine 36. At leucine 43 the chain carries D-leucine. A propeptide (removed by a carboxypeptidase) is located at residue arginine 45.

This sequence belongs to the conotoxin I1 superfamily. As to expression, expressed by the venom duct.

It is found in the secreted. Its function is as follows. Iota-conotoxins bind to voltage-gated sodium channels (Nav) and act as agonists by shifting the voltage-dependence of activation to more hyperpolarized levels. Produces general excitatory symptoms. The polypeptide is Iota-conotoxin-like R11.10 (Conus radiatus (Rayed cone)).